A 761-amino-acid polypeptide reads, in one-letter code: Pleckstrin homology domain-containing family M member 3 (761 aa).

Serine 132 carries the post-translational modification Phosphoserine. PH domains lie at 211 to 308 (NILK…EVVH) and 361 to 456 (NILK…IAAN). The Phorbol-ester/DAG-type zinc finger occupies 669 to 722 (SHVYSCSLCSQKGFICEICNNGEILYPFEDISTSRCESCGAVFHSECKEKSVPC).

Interacts with AKT1.

It is found in the cytoplasm. It localises to the golgi apparatus. Its subcellular location is the cell membrane. Involved in skeletal muscle differentiation. May act as a scaffold protein for AKT1 during muscle differentiation. The protein is Pleckstrin homology domain-containing family M member 3 of Homo sapiens (Human).